Here is a 252-residue protein sequence, read N- to C-terminus: Tabinhibitin 9 (252 aa).

The first 23 residues, 1-23, serve as a signal peptide directing secretion; the sequence is MTSNLYYVLISPYSLAYMVQYRS. The short motif at 32–34 is the Cell attachment site element; that stretch reads RGD. The SCP domain maps to 63–207; sequence YIRSTMCEIM…KARAFFTCNF (145 aa).

This sequence belongs to the CRISP family. As to expression, expressed in salivary glands.

The protein localises to the secreted. In terms of biological role, inhibits platelet aggregation induced by all agonists tested (ADP, arachidonic acid, the thromboxane A2 analog U46619, thrombin, and snake venom snaclecs (TMVA that activates platelet through GPIB, and stejnulxin that specifically acts through GPVI (GP6))). May act by competing with fibrinogen for binding to glycoprotein IIb/IIIa (ITGA2B/ITGB3). The polypeptide is Tabinhibitin 9 (Tabanus yao (Horsefly)).